We begin with the raw amino-acid sequence, 543 residues long: Protein GPR108 (543 aa).

An N-terminal signal peptide occupies residues 1-32 (MAVSERRGLGRGSPAEWGQRLLLVLLLGGCSG). N-linked (GlcNAc...) asparagine glycans are attached at residues asparagine 57 and asparagine 109. The disordered stretch occupies residues 149-186 (SKPGLPKPQATVPRKVDGGGTSAASKPKSTPAVIQGPS). Residues asparagine 200, asparagine 204, and asparagine 228 are each glycosylated (N-linked (GlcNAc...) asparagine). 7 helical membrane-spanning segments follow: residues 263 to 283 (LYMV…SILC), 292 to 312 (IHWL…FHSI), 336 to 356 (LLKG…WAFI), 367 to 387 (VFGI…IIES), 401 to 421 (ILFL…VWSI), 449 to 469 (VMVI…QVAV), and 473 to 493 (WQWL…VLTG). Asparagine 534 is a glycosylation site (N-linked (GlcNAc...) asparagine).

The protein belongs to the LU7TM family.

It is found in the golgi apparatus. Its subcellular location is the cis-Golgi network membrane. It localises to the trans-Golgi network membrane. The protein localises to the golgi apparatus membrane. In terms of biological role, may play a role in intracellular immune modulation by activating NF-kappaB response and attenuating Toll-like-receptor response. Functionally, (Microbial infection) Plays an essential function in adeno-associated virus (AAV) transduction across multiple serotypes except AAV5. May play a critical role in mediating the endosomal virus escape or in the AAV virions trafficking from endosomes to the nucleus. This chain is Protein GPR108, found in Homo sapiens (Human).